The following is a 302-amino-acid chain: MALSSSSHLLPFSRPPATFPRARHAGGGRGRAGATGRFIACSSPPPPDVVVTRERGKNAKLIAALEKHNVQSLELPLIKHVEGPDTDRLSAVLRDEKFDWITITSPEAAAVFLEGWKAAGNPKVRIAVVGAGTERVFDEVIQYNDGSLEVAFSPSKAMGKFLASELPRTTETTCKVLYPASAKAGHEIQNGLSNRGFEVTRLNTYTTVSVQDVDPLILKPALSAPVVAVASPSALRAWLNLASQVDNWGNAIACIGETTASAAKKFGLKSIYYPTTPGLDGWVESILEALRAHGQSKEAPGC.

A disordered region spans residues 1–39; it reads MALSSSSHLLPFSRPPATFPRARHAGGGRGRAGATGRFI. The transit peptide at 1–50 directs the protein to the chloroplast; that stretch reads MALSSSSHLLPFSRPPATFPRARHAGGGRGRAGATGRFIACSSPPPPDVV.

The protein belongs to the uroporphyrinogen-III synthase family.

Its subcellular location is the plastid. The protein localises to the chloroplast. The catalysed reaction is hydroxymethylbilane = uroporphyrinogen III + H2O. The protein operates within porphyrin-containing compound metabolism; protoporphyrin-IX biosynthesis; coproporphyrinogen-III from 5-aminolevulinate: step 3/4. Functionally, catalyzes cyclization of the linear tetrapyrrole, hydroxymethylbilane, to the macrocyclic uroporphyrinogen III, a precursor of tetrapyrroles such as chlorophyll, heme and phycobilins. The polypeptide is Uroporphyrinogen-III synthase, chloroplastic (UROS) (Oryza sativa subsp. japonica (Rice)).